We begin with the raw amino-acid sequence, 448 residues long: MRECISVHVGQAGVQMGNACWELYCLEHGIQPDGQMPSDKTIGGGDDSFTTFFCETGAGKHVPRAVFVDLEPTVIDEIRNGPYRQLFHPEQLITGKEDAANNYARGHYTIGKEIIDPVLDRIRKLSDQCTGLQGFLVFHSFGGGTGSGFTSLLMERLSVDYGKKSKLEFSIYPAPQVSTAVVEPYNSILTTHTTLEHSDCAFMVDNEAIYDICRRNLDIERPTYTNLNRLISQIVSSITASLRFDGALNVDLTEFQTNLVPYPRIHFPLATYAPVISAEKAYHEQLSVAEITNACFEPANQMVKCDPRHGKYMACCLLYRGDVVPKDVNAAIAAIKTKRSIQFVDWCPTGFKVGINYQPPTVVPGGDLAKVQRAVCMLSNTTAIAEAWARLDHKFDLMYAKRAFVHWYVGEGMEEGEFSEAREDMAALEKDYEEVGIDSYEDEDEGEE.

The MREC motif motif lies at 1–4 (MREC). Q11 is a binding site for GTP. At K40 the chain carries N6-acetyllysine. S48 carries the post-translational modification Phosphoserine. E71 serves as a coordination point for GTP. E71 is a binding site for Mg(2+). Y83 is subject to 3'-nitrotyrosine. GTP is bound by residues S140, G144, T145, T179, N206, and N228. E254 is a catalytic residue. Y432 is modified (phosphotyrosine). Position 439 is a phosphoserine (S439).

Belongs to the tubulin family. As to quaternary structure, dimer of alpha and beta chains. A typical microtubule is a hollow water-filled tube with an outer diameter of 25 nm and an inner diameter of 15 nM. Alpha-beta heterodimers associate head-to-tail to form protofilaments running lengthwise along the microtubule wall with the beta-tubulin subunit facing the microtubule plus end conferring a structural polarity. Microtubules usually have 13 protofilaments but different protofilament numbers can be found in some organisms and specialized cells. Interacts with CFAP157. Requires Mg(2+) as cofactor. Post-translationally, some glutamate residues at the C-terminus are polyglycylated, resulting in polyglycine chains on the gamma-carboxyl group. Glycylation is mainly limited to tubulin incorporated into axonemes (cilia and flagella) whereas glutamylation is prevalent in neuronal cells, centrioles, axonemes, and the mitotic spindle. Both modifications can coexist on the same protein on adjacent residues, and lowering polyglycylation levels increases polyglutamylation, and reciprocally. Cilia and flagella glycylation is required for their stability and maintenance. Flagella glycylation controls sperm motility. In terms of processing, some glutamate residues at the C-terminus are polyglutamylated, resulting in polyglutamate chains on the gamma-carboxyl group. Polyglutamylation plays a key role in microtubule severing by spastin (SPAST). SPAST preferentially recognizes and acts on microtubules decorated with short polyglutamate tails: severing activity by SPAST increases as the number of glutamates per tubulin rises from one to eight, but decreases beyond this glutamylation threshold. Glutamylation is also involved in cilia motility. Acetylation of alpha chains at Lys-40 is located inside the microtubule lumen. This modification has been correlated with increased microtubule stability, intracellular transport and ciliary assembly. Post-translationally, methylation of alpha chains at Lys-40 is found in mitotic microtubules and is required for normal mitosis and cytokinesis contributing to genomic stability. In terms of processing, although this tubulin does not encode a C-terminal tyrosine, a C-terminal tyrosine can be added post-translationally by the tubulin tyrosine ligase (TTL). It can then undergo a detyrosination cycle by the tubulin tyrosine carboxypeptidase (MATCAP1/KIAA0895L).

The protein resides in the cytoplasm. It localises to the cytoskeleton. The catalysed reaction is GTP + H2O = GDP + phosphate + H(+). Tubulin is the major constituent of microtubules, a cylinder consisting of laterally associated linear protofilaments composed of alpha- and beta-tubulin heterodimers. Microtubules grow by the addition of GTP-tubulin dimers to the microtubule end, where a stabilizing cap forms. Below the cap, tubulin dimers are in GDP-bound state, owing to GTPase activity of alpha-tubulin. This is Tubulin alpha-4A chain (TUBA4A) from Macaca fascicularis (Crab-eating macaque).